Consider the following 418-residue polypeptide: Endoglucanase EG-II (418 aa).

The N-terminal stretch at 1-21 (MNKSVAPLLLAASILYGGAAA) is a signal peptide. Residue glutamine 22 is modified to Pyrrolidone carboxylic acid. Residues 22–57 (QQTVWGQCGGIGWSGPTNCAPGSACSTLNPYYAQCI) enclose the CBM1 domain. The tract at residues 58-91 (PGATTITTSTRPPSGPTTTTRATSTSSSTPPTSS) is linker. The segment at 63-91 (ITTSTRPPSGPTTTTRATSTSSSTPPTSS) is disordered. Residues 92–418 (GVRFAGVNIA…SLVSSCLARK (327 aa)) form a catalytic region. Cysteine 107 and cysteine 113 are oxidised to a cystine. Asparagine 124 is a glycosylation site (N-linked (GlcNAc) asparagine). Cysteine 183 and cysteine 190 form a disulfide bridge. The active-site Proton donor/acceptor is glutamate 239. Intrachain disulfides connect cysteine 323-cysteine 359 and cysteine 364-cysteine 414. The active-site Nucleophile is glutamate 350.

It belongs to the glycosyl hydrolase 5 (cellulase A) family.

Its subcellular location is the secreted. It catalyses the reaction Endohydrolysis of (1-&gt;4)-beta-D-glucosidic linkages in cellulose, lichenin and cereal beta-D-glucans.. Its function is as follows. Endoglucanase (EG) that cleaves the internal beta-1,4-glucosidic bonds in cellulose. The degradation of cellulose involves an interplay between different cellulolytic enzymes. Hydrolysis starts with EGs, which cut internal glycosidic linkages to reduce the polymerization degree of the substrate and creates new chain ends for exocellobiohydrolases (CBHs). The CBH release the disaccharide cellobiose from the non-reducing end of the cellulose polymer chain. Finally, beta-1,4-glucosidases hydrolyze the cellobiose and other short cello-oligosaccharides into glucose units. In Hypocrea jecorina (strain ATCC 56765 / BCRC 32924 / NRRL 11460 / Rut C-30) (Trichoderma reesei), this protein is Endoglucanase EG-II (egl2).